A 329-amino-acid chain; its full sequence is Malate dehydrogenase (329 aa).

Residue G12 to G18 coordinates NAD(+). 2 residues coordinate substrate: R95 and R101. Residues N108, Q115, and V132–N134 each bind NAD(+). Residues N134 and R165 each coordinate substrate. H190 serves as the catalytic Proton acceptor.

This sequence belongs to the LDH/MDH superfamily. MDH type 2 family. As to quaternary structure, homodimer.

The enzyme catalyses (S)-malate + NAD(+) = oxaloacetate + NADH + H(+). Its activity is regulated as follows. Substrate inhibition is observed at high concentrations of oxaloacetate. Functionally, catalyzes the reversible oxidation of malate to oxaloacetate. Catalyzes the reduction of oxaloacetate more efficiently than the oxidation of malate. The sequence is that of Malate dehydrogenase from Syntrophobacter fumaroxidans (strain DSM 10017 / MPOB).